An 855-amino-acid chain; its full sequence is Envelope glycoprotein gp150 (855 aa).

At 1 to 784 (MAEGFAANRQ…WIGNIPQYLK (784 aa)) the chain is on the extracellular side. Residues asparagine 220, asparagine 258, asparagine 269, asparagine 274, asparagine 298, asparagine 336, asparagine 418, asparagine 422, asparagine 448, asparagine 469, asparagine 481, asparagine 499, asparagine 518, asparagine 531, asparagine 548, and asparagine 551 are each glycosylated (N-linked (GlcNAc...) asparagine; by host). The interval 615–635 (VMLALATVLSMAGAGTGATAI) is fusion peptide. The stretch at 642–692 (HQVLATHQETIEKVTEALKINNLRLVTLEHQVLVIGLKVEAMEKFLYTAFA) forms a coiled coil. The interval 661–679 (INNLRLVTLEHQVLVIGLK) is immunosuppression. Residues asparagine 716, asparagine 720, asparagine 728, and asparagine 736 are each glycosylated (N-linked (GlcNAc...) asparagine; by host). Residues 735–771 (YNQTKELQQKFYEIIMNIEQNNVQVKKGLQQLQEWED) adopt a coiled-coil conformation. The helical transmembrane segment at 785–805 (GLLGGILGIGIGVLLLILCLP) threads the bilayer. Residues 806 to 855 (TLVDCIRNCISKVLGYTVIAMPEIGDEEETVQMELRKNGRQCGMSEKEEE) are Cytoplasmic-facing.

As to quaternary structure, the mature envelope protein (Env) consists of a trimer of SU-TM heterodimers attached by noncovalent interactions or by a labile interchain disulfide bond. Post-translationally, specific enzymatic cleavages in vivo yield mature proteins. Envelope glycoproteins are synthesized as an inactive precursor that is N-glycosylated and processed likely by host cell furin or by a furin-like protease in the Golgi to yield the mature SU and TM proteins. The cleavage site between SU and TM requires the minimal sequence [KR]-X-[KR]-R.

It localises to the virion membrane. The protein localises to the host cell membrane. In terms of biological role, the surface protein (SU) attaches the virus to the host cell by binding to its receptor. This interaction triggers the refolding of the transmembrane protein (TM) and is thought to activate its fusogenic potential by unmasking its fusion peptide. Fusion occurs at the host cell plasma membrane. The transmembrane protein (TM) acts as a class I viral fusion protein. Under the current model, the protein has at least 3 conformational states: pre-fusion native state, pre-hairpin intermediate state, and post-fusion hairpin state. During viral and target cell membrane fusion, the coiled coil regions (heptad repeats) assume a trimer-of-hairpins structure, positioning the fusion peptide in close proximity to the C-terminal region of the ectodomain. The formation of this structure appears to drive apposition and subsequent fusion of viral and target cell membranes. Membranes fusion leads to delivery of the nucleocapsid into the cytoplasm. This Felidae (cat family) protein is Envelope glycoprotein gp150 (env).